The chain runs to 389 residues: Flagellar P-ring protein (389 aa).

A signal peptide spans 1–33 (MRPLVAARRRAAACCALAACMLALAFAPAAARA).

The protein belongs to the FlgI family. As to quaternary structure, the basal body constitutes a major portion of the flagellar organelle and consists of four rings (L,P,S, and M) mounted on a central rod.

It localises to the periplasm. The protein resides in the bacterial flagellum basal body. In terms of biological role, assembles around the rod to form the L-ring and probably protects the motor/basal body from shearing forces during rotation. This Burkholderia pseudomallei (strain K96243) protein is Flagellar P-ring protein.